Reading from the N-terminus, the 1360-residue chain is Probable inactive protein kinase DDB_G0270444 (1360 aa).

WD repeat units follow at residues 44–83, 109–152, 166–205, and 208–247; these read SSKRPITFVIYDEEGNQFITGEDDFFIRLYNEDGTYIKQL, IRNI…AVYN, TTSAGITALTFDPTNLLVISGTSDGIVRKHSLRERVIMGT, and GHSRGAILNLLLTKHGHLLSSSMDRTIRLWDIDSGKQITG. In terms of domain architecture, Protein kinase spans 636-954; that stretch reads EKSIQTYLSN…IEQALSHPFI (319 aa). The segment covering 959–979 has biased composition (low complexity); the sequence is KQQQQQQQQKQQQQQQQQQQQ. Disordered stretches follow at residues 959–989, 1258–1311, and 1331–1360; these read KQQQQQQQQKQQQQQQQQQQQEIIPKDDSLT, IISE…VEEE, and EVEEEIEVEEEIEVEEEIQVEDDTDKSNDF. Coiled coils occupy residues 1014–1269 and 1297–1352; these read SKIK…QEGE and NASD…QVED. The segment covering 1291 to 1300 has biased composition (basic and acidic residues); that stretch reads LERDNKNASD. 2 stretches are compositionally biased toward acidic residues: residues 1301 to 1311 and 1331 to 1354; these read HDDEQQFVEEE and EVEEEIEVEEEIEVEEEIQVEDDT.

It belongs to the protein kinase superfamily. CMGC Ser/Thr protein kinase family.

The sequence is that of Probable inactive protein kinase DDB_G0270444 from Dictyostelium discoideum (Social amoeba).